A 185-amino-acid polypeptide reads, in one-letter code: Transcription termination/antitermination protein NusG (185 aa).

The 31-residue stretch at 134-164 folds into the KOW domain; sequence VGKRVRIVDGAFSGFEAPITEINGDKLTLTV.

Belongs to the NusG family.

In terms of biological role, participates in transcription elongation, termination and antitermination. The protein is Transcription termination/antitermination protein NusG of Lactococcus lactis subsp. lactis (strain IL1403) (Streptococcus lactis).